We begin with the raw amino-acid sequence, 279 residues long: PHO85 cyclin-1 (279 aa).

In terms of domain architecture, Cyclin N-terminal spans 19-152; the sequence is DIIKFLTDTT…LLQLLNWDLR (134 aa). A required for degradation by DMA1 region spans residues 29 to 36; sequence LRVVPSSN. The residue at position 39 (Thr-39) is a Phosphothreonine; by PHO85. Ser-43 carries the post-translational modification Phosphoserine; by PHO85. Glycyl lysine isopeptide (Lys-Gly) (interchain with G-Cter in ubiquitin) cross-links involve residues Lys-82 and Lys-121.

This sequence belongs to the cyclin family. PCL1,2 subfamily. As to quaternary structure, forms a cyclin-CDK complex with PHO85. Interacts with HMS1, NCP1 and NPA3. Interacts with DMA1. Post-translationally, phosphorylated by PHO85; necessary for interaction with DMA1 and subsequent degradation. Ubiquitinated by E3 ubiquitin ligase DMA1 in response to nutrient condition; this targets PCL1 for destruction.

It localises to the cytoplasm. Its subcellular location is the nucleus. Its function is as follows. G1/S-specific cyclin partner of the cyclin-dependent kinase (CDK) PHO85. Essential for the control of the cell cycle at the G1/S (start) transition. The PCL1-PHO85 cyclin-CDK holoenzyme is involved in phosphorylation of the CDK inhibitor (CKI) SIC1, which is required for its ubiquitination and degradation, releasing repression of b-type cyclins and promoting exit from mitosis. Together with cyclin PCL2, positively controls degradation of sphingoid long chain base kinase LCB4. PCL1-PHO85 phosphorylates LCB4, which is required for its ubiquitination and degradation. PCL1-PHO85 also phosphorylates HMS1, NCP1 and NPA3, which may all have a role in mitotic exit. This is PHO85 cyclin-1 from Saccharomyces cerevisiae (strain ATCC 204508 / S288c) (Baker's yeast).